Reading from the N-terminus, the 343-residue chain is Heat-inducible transcription repressor HrcA (343 aa).

It belongs to the HrcA family.

Negative regulator of class I heat shock genes (grpE-dnaK-dnaJ and groELS operons). Prevents heat-shock induction of these operons. This is Heat-inducible transcription repressor HrcA from Mycobacterium avium (strain 104).